The following is a 332-amino-acid chain: MKKRKNKKNSKAAEKALKVTINGKEETVYEQETPETEANKSMTFSNWEEKRQAEQEVAASQEHPDEDEFNWDSEEDKVFKEDPKVVPPFQKKKTKLYAKGKTGAAKPVKRVAATIAFAAVIGTGLGLFALNISGNKEASAPASLEDSLGSQTAKAGDTSADKQTSGAEKQAAQTEGTYKTYAVQAGKFSNEKGAETLTEQLTEKGYSAVSLSKDDGYTYVIAGLASEKEVSQQLGQVLIDSDFEAWGGKELSLSIESDMTDSFKETAELAAKAILDEDITKASVEKIEKSLGETKASETGEKKAILQALKELEDPSAEAGWKAQQELLAVVK.

Positions 1-10 are enriched in basic residues; the sequence is MKKRKNKKNS. Positions 1–71 are disordered; sequence MKKRKNKKNS…EHPDEDEFNW (71 aa). Residues 11–27 show a composition bias toward basic and acidic residues; it reads KAAEKALKVTINGKEET. The helical transmembrane segment at 112–132 threads the bilayer; the sequence is AATIAFAAVIGTGLGLFALNI. The segment at 139 to 174 is disordered; it reads SAPASLEDSLGSQTAKAGDTSADKQTSGAEKQAAQT. Residues 161 to 174 are compositionally biased toward polar residues; the sequence is DKQTSGAEKQAAQT. The SPOR domain maps to 175–250; sequence EGTYKTYAVQ…SDFEAWGGKE (76 aa).

It is found in the cell membrane. With respect to regulation, appears to be degraded early in engulfment, in correlation with its loss from polar septa. Facilitates the rapid and spatially regulated dissolution of septal peptidoglycan. The protein is Stage II sporulation protein B of Bacillus subtilis (strain 168).